Reading from the N-terminus, the 208-residue chain is Inducible T-cell costimulator (208 aa).

Residues Met-1–Thr-19 form the signal peptide. Topologically, residues Gly-20 to Lys-140 are extracellular. Asn-23 carries N-linked (GlcNAc...) asparagine glycosylation. Residues Met-30–Glu-132 form the Ig-like V-type domain. Disulfide bonds link Cys-42–Cys-108 and Cys-63–Cys-82. A glycan (N-linked (GlcNAc...) asparagine) is linked at Asn-122. The helical transmembrane segment at Phe-141–Leu-161 threads the bilayer. The Cytoplasmic portion of the chain corresponds to Cys-162–Ala-208.

Homodimer; disulfide-linked. Interacts with ICOSLG. Interacts with PIK3R1. Interacts with TBK1; this interaction is critical for the maturation of T follicular regulatory cells. Post-translationally, N-glycosylated.

It is found in the cell membrane. Its function is as follows. Stimulatory receptor expressed in activated or antigen-experienced T-cells that plays an important role in the immune response. Upon binding to its ligand ICOSL expressed on antigen presenting cells (APCs), delivers costimulatory signals that enhances all basic T-cell responses to a foreign antigen, namely proliferation, secretion of lymphokines including IL10, up-regulation of molecules that mediate cell-cell interaction, and effective help for antibody secretion by B-cells. Also acts as a costimulatory receptor critical for the differentiation of T follicular regulatory cells upon immune challenges such as viral infection. Mechanistically, potentiates TCR-induced calcium flux by augmenting PLCG1 activation and actin remodeling. In addition, activates PI3K signaling pathways independently of calcium flux. Essential both for efficient interaction between T and B-cells and for normal antibody responses to T-cell dependent antigens. Prevents the apoptosis of pre-activated T-cells. Plays a critical role in CD40-mediated class switching of immunoglobin isotypes. The polypeptide is Inducible T-cell costimulator (ICOS) (Canis lupus familiaris (Dog)).